The chain runs to 520 residues: Probable glycine dehydrogenase (decarboxylating) subunit 2 (520 aa).

Positions Met-1–Asp-29 are disordered. Residue Lys-279 is modified to N6-(pyridoxal phosphate)lysine.

Belongs to the GcvP family. C-terminal subunit subfamily. In terms of assembly, the glycine cleavage system is composed of four proteins: P, T, L and H. In this organism, the P 'protein' is a heterodimer of two subunits. It depends on pyridoxal 5'-phosphate as a cofactor.

The catalysed reaction is N(6)-[(R)-lipoyl]-L-lysyl-[glycine-cleavage complex H protein] + glycine + H(+) = N(6)-[(R)-S(8)-aminomethyldihydrolipoyl]-L-lysyl-[glycine-cleavage complex H protein] + CO2. The glycine cleavage system catalyzes the degradation of glycine. The P protein binds the alpha-amino group of glycine through its pyridoxal phosphate cofactor; CO(2) is released and the remaining methylamine moiety is then transferred to the lipoamide cofactor of the H protein. The chain is Probable glycine dehydrogenase (decarboxylating) subunit 2 from Aeropyrum pernix (strain ATCC 700893 / DSM 11879 / JCM 9820 / NBRC 100138 / K1).